The sequence spans 428 residues: Trigger factor (428 aa).

Residues 163-248 (GDMVVIDYKG…VHEIKEKELP (86 aa)) form the PPIase FKBP-type domain.

It belongs to the FKBP-type PPIase family. Tig subfamily.

The protein localises to the cytoplasm. The enzyme catalyses [protein]-peptidylproline (omega=180) = [protein]-peptidylproline (omega=0). Functionally, involved in protein export. Acts as a chaperone by maintaining the newly synthesized protein in an open conformation. Functions as a peptidyl-prolyl cis-trans isomerase. This is Trigger factor from Alkaliphilus metalliredigens (strain QYMF).